A 108-amino-acid chain; its full sequence is Trp operon repressor homolog (108 aa).

A DNA-binding region spans residues 59–82 (QRQISQLLGVGVATITRGSNELKS).

This sequence belongs to the TrpR family. In terms of assembly, homodimer.

It is found in the cytoplasm. Functionally, this protein is an aporepressor. When complexed with L-tryptophan it binds the operator region of the trp operon and prevents the initiation of transcription. The protein is Trp operon repressor homolog of Aliivibrio salmonicida (strain LFI1238) (Vibrio salmonicida (strain LFI1238)).